The sequence spans 513 residues: Sterol 14-alpha demethylase (513 aa).

Residues 8-28 (AYALLAFVAIMALNVTYQFLF) traverse the membrane as a helical segment. N-linked (GlcNAc...) asparagine glycans are attached at residues N32 and N332. C453 serves as a coordination point for heme.

Belongs to the cytochrome P450 family. Heme is required as a cofactor.

It is found in the endoplasmic reticulum membrane. It carries out the reaction a 14alpha-methyl steroid + 3 reduced [NADPH--hemoprotein reductase] + 3 O2 = a Delta(14) steroid + formate + 3 oxidized [NADPH--hemoprotein reductase] + 4 H2O + 4 H(+). The enzyme catalyses a 14alpha-methyl steroid + reduced [NADPH--hemoprotein reductase] + O2 = a 14alpha-hydroxymethyl steroid + oxidized [NADPH--hemoprotein reductase] + H2O + H(+). The catalysed reaction is a 14alpha-hydroxymethyl steroid + reduced [NADPH--hemoprotein reductase] + O2 = a 14alpha-formyl steroid + oxidized [NADPH--hemoprotein reductase] + 2 H2O + H(+). It catalyses the reaction a 14alpha-formyl steroid + reduced [NADPH--hemoprotein reductase] + O2 = a Delta(14) steroid + formate + oxidized [NADPH--hemoprotein reductase] + H2O + 2 H(+). It carries out the reaction lanosterol + 3 reduced [NADPH--hemoprotein reductase] + 3 O2 = 4,4-dimethyl-5alpha-cholesta-8,14,24-trien-3beta-ol + formate + 3 oxidized [NADPH--hemoprotein reductase] + 4 H2O + 4 H(+). The enzyme catalyses lanosterol + reduced [NADPH--hemoprotein reductase] + O2 = 32-hydroxylanosterol + oxidized [NADPH--hemoprotein reductase] + H2O + H(+). The catalysed reaction is 32-hydroxylanosterol + reduced [NADPH--hemoprotein reductase] + O2 = 32-oxolanosterol + oxidized [NADPH--hemoprotein reductase] + 2 H2O + H(+). It catalyses the reaction 32-oxolanosterol + reduced [NADPH--hemoprotein reductase] + O2 = 4,4-dimethyl-5alpha-cholesta-8,14,24-trien-3beta-ol + formate + oxidized [NADPH--hemoprotein reductase] + H2O + 2 H(+). It carries out the reaction eburicol + 3 reduced [NADPH--hemoprotein reductase] + 3 O2 = 14-demethyleburicol + formate + 3 oxidized [NADPH--hemoprotein reductase] + 4 H2O + 4 H(+). The enzyme catalyses eburicol + reduced [NADPH--hemoprotein reductase] + O2 = 32-hydroxyeburicol + oxidized [NADPH--hemoprotein reductase] + H2O + H(+). The catalysed reaction is 32-hydroxyeburicol + reduced [NADPH--hemoprotein reductase] + O2 = 32-oxoeburicol + oxidized [NADPH--hemoprotein reductase] + 2 H2O + H(+). It catalyses the reaction 32-oxoeburicol + reduced [NADPH--hemoprotein reductase] + O2 = 14-demethyleburicol + formate + oxidized [NADPH--hemoprotein reductase] + H2O + 2 H(+). The protein operates within steroid biosynthesis; sterol biosynthesis. Functionally, sterol 14alpha-demethylase, encoded by cyp51A, cyp51B and cyp51C, that plays a critical role in the third module of ergosterol biosynthesis pathway, being ergosterol the major sterol component in fungal membranes that participates in a variety of functions. The third module or late pathway involves the ergosterol synthesis itself through consecutive reactions that mainly occur in the endoplasmic reticulum (ER) membrane. In filamentous fungi, during the initial step of this module, lanosterol (lanosta-8,24-dien-3beta-ol) can be metabolized to eburicol. Sterol 14alpha-demethylase catalyzes the three-step oxidative removal of the 14alpha-methyl group (C-32) of both these sterols in the form of formate, and converts eburicol and lanosterol to 14-demethyleburicol (4,4,24-trimethylergosta-8,14,24(28)-trienol) and 4,4-dimethyl-5alpha-cholesta-8,14,24-trien-3beta-ol, respectively, which are further metabolized by other enzymes in the pathway to ergosterol. Can also use substrates not intrinsic to fungi, such as 24,25-dihydrolanosterol (DHL), producing 4,4'-dimethyl-8,14-cholestadien-3-beta-ol, but at lower rates than the endogenous substrates. In terms of biological role, as a target of azole drugs, plays a crucial role in azole drug susceptibility. The polypeptide is Sterol 14-alpha demethylase (Aspergillus flavus (strain ATCC 200026 / FGSC A1120 / IAM 13836 / NRRL 3357 / JCM 12722 / SRRC 167)).